The chain runs to 227 residues: Isopentenyl-diphosphate Delta-isomerase 1 (227 aa).

Lysine 36 contributes to the substrate binding site. Histidine 40 and histidine 51 together coordinate Mg(2+). The Nudix hydrolase domain occupies 49–199 (LLHRAFSVFL…EIKITPWFQI (151 aa)). The substrate site is built by arginine 70 and lysine 74. Cysteine 86 serves as the catalytic Proton acceptor. Residue serine 87 participates in substrate binding. Mg(2+) contacts are provided by glutamate 146 and glutamate 148. The active site involves glutamate 148. Residue lysine 176 is modified to N6-acetyllysine.

This sequence belongs to the IPP isomerase type 1 family. As to quaternary structure, monomer. Mg(2+) serves as cofactor.

The protein localises to the peroxisome. It catalyses the reaction isopentenyl diphosphate = dimethylallyl diphosphate. It participates in isoprenoid biosynthesis; dimethylallyl diphosphate biosynthesis; dimethylallyl diphosphate from isopentenyl diphosphate: step 1/1. Functionally, catalyzes the 1,3-allylic rearrangement of the homoallylic substrate isopentenyl (IPP) to its highly electrophilic allylic isomer, dimethylallyl diphosphate (DMAPP). The polypeptide is Isopentenyl-diphosphate Delta-isomerase 1 (IDI1) (Bos taurus (Bovine)).